The following is a 602-amino-acid chain: UvrABC system protein C (602 aa).

The region spanning 17–94 is the GIY-YIG domain; the sequence is TTSGCYKMYS…IKEHKPDYNI (78 aa). The 36-residue stretch at 199-234 folds into the UVR domain; sequence SKLLDEIEIKMKEVIKREDFESAIKLKETKRSLIEI.

It belongs to the UvrC family. As to quaternary structure, interacts with UvrB in an incision complex.

It is found in the cytoplasm. In terms of biological role, the UvrABC repair system catalyzes the recognition and processing of DNA lesions. UvrC both incises the 5' and 3' sides of the lesion. The N-terminal half is responsible for the 3' incision and the C-terminal half is responsible for the 5' incision. This is UvrABC system protein C from Borrelia turicatae (strain 91E135).